We begin with the raw amino-acid sequence, 273 residues long: MNWSIFEGLLSGVNKYSTAFGRIWLSLVFIFRVLVYLVTAERVWSDDHKDFDCNTRQPGCSNVCFDEFFPVSHVRLWALQLILVTCPSLLVVMHVAYREVQEKRHREAHGENSGRLYLNPGKKRGGLWWTYVCSLVFKASVDIAFLYVFHSFYPKYILPPVVKCHADPCPNIVDCFISKPSEKNIFTLFMVATAAICILLNLVELIYLVSKRCHECLAARKAQAMCTGHHPHGTTSSCKQDDLLSGDLIFLGSDSHPPLLPDRPRDHVKKTIL.

The Cytoplasmic portion of the chain corresponds to 1–20 (MNWSIFEGLLSGVNKYSTAF). Residues 21–40 (GRIWLSLVFIFRVLVYLVTA) traverse the membrane as a helical segment. Topologically, residues 41-75 (ERVWSDDHKDFDCNTRQPGCSNVCFDEFFPVSHVR) are extracellular. Residues 76–98 (LWALQLILVTCPSLLVVMHVAYR) form a helical membrane-spanning segment. Topologically, residues 99-126 (EVQEKRHREAHGENSGRLYLNPGKKRGG) are cytoplasmic. A helical transmembrane segment spans residues 127–149 (LWWTYVCSLVFKASVDIAFLYVF). The Extracellular portion of the chain corresponds to 150–187 (HSFYPKYILPPVVKCHADPCPNIVDCFISKPSEKNIFT). A helical transmembrane segment spans residues 188–210 (LFMVATAAICILLNLVELIYLVS). The Cytoplasmic portion of the chain corresponds to 211–273 (KRCHECLAAR…PRDHVKKTIL (63 aa)).

The protein belongs to the connexin family. Beta-type (group I) subfamily. A connexon is composed of a hexamer of connexins.

Its subcellular location is the cell membrane. The protein localises to the cell junction. It is found in the gap junction. Functionally, one gap junction consists of a cluster of closely packed pairs of transmembrane channels, the connexons, through which materials of low MW diffuse from one cell to a neighboring cell. The sequence is that of Gap junction beta-5 protein (GJB5) from Homo sapiens (Human).